The sequence spans 222 residues: Putative metal transport protein MJ1569 (222 aa).

6 helical membrane-spanning segments follow: residues 3–23 (IPDG…MIPI), 39–59 (LPLL…NLPV), 81–101 (WVAT…FGDG), 102–122 (GITC…FVGY), 135–155 (VIAS…VAGF), and 180–200 (AFAH…IVVW).

Belongs to the CbiM family.

It localises to the cell membrane. Functionally, may be involved in metal transport. This chain is Putative metal transport protein MJ1569, found in Methanocaldococcus jannaschii (strain ATCC 43067 / DSM 2661 / JAL-1 / JCM 10045 / NBRC 100440) (Methanococcus jannaschii).